Here is a 293-residue protein sequence, read N- to C-terminus: 4-hydroxy-tetrahydrodipicolinate synthase 1 (293 aa).

Pyruvate is bound at residue T46. The active-site Proton donor/acceptor is Y134. The active-site Schiff-base intermediate with substrate is K162. I204 serves as a coordination point for pyruvate.

It belongs to the DapA family. In terms of assembly, homotetramer; dimer of dimers.

Its subcellular location is the cytoplasm. The catalysed reaction is L-aspartate 4-semialdehyde + pyruvate = (2S,4S)-4-hydroxy-2,3,4,5-tetrahydrodipicolinate + H2O + H(+). Its pathway is amino-acid biosynthesis; L-lysine biosynthesis via DAP pathway; (S)-tetrahydrodipicolinate from L-aspartate: step 3/4. Its function is as follows. Catalyzes the condensation of (S)-aspartate-beta-semialdehyde [(S)-ASA] and pyruvate to 4-hydroxy-tetrahydrodipicolinate (HTPA). This Clostridium acetobutylicum (strain ATCC 824 / DSM 792 / JCM 1419 / IAM 19013 / LMG 5710 / NBRC 13948 / NRRL B-527 / VKM B-1787 / 2291 / W) protein is 4-hydroxy-tetrahydrodipicolinate synthase 1.